Reading from the N-terminus, the 778-residue chain is Tubulin polyglutamylase ttll6 (778 aa).

Residues Met1–Val43 form a disordered region. Positions Lys51–Thr393 constitute a TTL domain. ATP is bound by residues Lys168, Gln174–Gly175, Gln196–Met199, and Lys209–Asp211. A protein is bound at residue Gln174. Arg235 is a binding site for L-glutamate. Position 257-258 (Thr257–Asn258) interacts with ATP. Residues Tyr259 and Lys277 each coordinate L-glutamate. Positions 340, 353, and 355 each coordinate Mg(2+). Residue His356 participates in a protein binding. Positions Arg365–Arg445 are c-MTBD region. L-glutamate is bound at residue Lys371. Composition is skewed to basic and acidic residues over residues Glu402–Arg418, Lys485–Val510, Ser533–Leu542, and Leu760–Leu778. Disordered regions lie at residues Glu402 to Ala422, Lys485 to Leu542, and Pro758 to Leu778.

This sequence belongs to the tubulin--tyrosine ligase family. The cofactor is Mg(2+).

The protein localises to the cytoplasm. Its subcellular location is the cytoskeleton. It localises to the cilium axoneme. It is found in the cilium basal body. It carries out the reaction L-glutamyl-[protein] + L-glutamate + ATP = gamma-L-glutamyl-L-glutamyl-[protein] + ADP + phosphate + H(+). The enzyme catalyses (L-glutamyl)(n)-gamma-L-glutamyl-L-glutamyl-[protein] + L-glutamate + ATP = (L-glutamyl)(n+1)-gamma-L-glutamyl-L-glutamyl-[protein] + ADP + phosphate + H(+). Its function is as follows. Polyglutamylase which modifies both tubulin and non-tubulin proteins, generating alpha-linked polyglutamate side chains on the gamma-carboxyl group of specific glutamate residues of target proteins. Preferentially mediates ATP-dependent long polyglutamate chain elongation over the initiation step of the polyglutamylation reaction. Preferentially modifies the alpha-tubulin tail over a beta-tail. Mediates microtubule polyglutamylation in cilia axoneme, which is important for ciliary structural formation and motility. Polyglutamylates olfactory cilia, necessary for the regulation of ciliary structure and beating. In Danio rerio (Zebrafish), this protein is Tubulin polyglutamylase ttll6.